The chain runs to 300 residues: Dihydroorotate dehydrogenase B (NAD(+)), catalytic subunit (300 aa).

Residues Ser21 and 45 to 46 each bind FMN; that span reads KS. Substrate is bound by residues Lys45, 69-73, and Asn125; that span reads NAVGL. Position 125 (Asn125) interacts with FMN. Catalysis depends on Cys128, which acts as the Nucleophile. FMN is bound by residues Lys163 and Ile187. Position 188 to 189 (188 to 189) interacts with substrate; that stretch reads NT. FMN contacts are provided by residues Gly213, 239–240, and 261–262; these read GG and GT.

The protein belongs to the dihydroorotate dehydrogenase family. Type 1 subfamily. As to quaternary structure, heterotetramer of 2 PyrK and 2 PyrD type B subunits. FMN is required as a cofactor.

The protein localises to the cytoplasm. The enzyme catalyses (S)-dihydroorotate + NAD(+) = orotate + NADH + H(+). It functions in the pathway pyrimidine metabolism; UMP biosynthesis via de novo pathway; orotate from (S)-dihydroorotate (NAD(+) route): step 1/1. Functionally, catalyzes the conversion of dihydroorotate to orotate with NAD(+) as electron acceptor. This is Dihydroorotate dehydrogenase B (NAD(+)), catalytic subunit (pyrD) from Thermoplasma acidophilum (strain ATCC 25905 / DSM 1728 / JCM 9062 / NBRC 15155 / AMRC-C165).